The following is a 281-amino-acid chain: CCAAT/enhancer-binding protein epsilon (281 aa).

Positions 1–30 (MSHGTYYECEPRGGQQPLEFSGGRAGPGEL) are disordered. K121 participates in a covalent cross-link: Glycyl lysine isopeptide (Lys-Gly) (interchain with G-Cter in SUMO2). Residue S181 is modified to Phosphoserine. A bZIP domain is found at 204–267 (SLEYRLRRER…DTLRNLFRQI (64 aa)). Residues 208-228 (RLRRERNNIAVRKSRDKAKRR) form a basic motif region. Positions 230-237 (LETQQKVL) are leucine-zipper.

The protein belongs to the bZIP family. C/EBP subfamily. In terms of assembly, binds DNA as a homodimer and as a heterodimer. Can form stable heterodimers with CEBPA, CEBPB and CEBPD. Interacts with GATA1 and SPI1. Interacts with SMARCD2. In terms of processing, phosphorylated. As to expression, strongest expression occurs in promyelocyte and late-myeloblast-like cell lines.

It localises to the nucleus. Transcriptional activator. C/EBP are DNA-binding proteins that recognize two different motifs: the CCAAT homology common to many promoters and the enhanced core homology common to many enhancers. Required for the promyelocyte-myelocyte transition in myeloid differentiation. The polypeptide is CCAAT/enhancer-binding protein epsilon (CEBPE) (Homo sapiens (Human)).